The primary structure comprises 239 residues: Uridylate kinase (239 aa).

12–15 is an ATP binding site; sequence KLSG. Residues 21 to 26 are involved in allosteric activation by GTP; it reads GEQGFG. Gly-55 is a UMP binding site. The ATP site is built by Gly-56 and Arg-60. Residues Asp-75 and 136 to 143 each bind UMP; that span reads TGNPYFST. Positions 163, 169, and 172 each coordinate ATP.

This sequence belongs to the UMP kinase family. Homohexamer.

It is found in the cytoplasm. It carries out the reaction UMP + ATP = UDP + ADP. Its pathway is pyrimidine metabolism; CTP biosynthesis via de novo pathway; UDP from UMP (UMPK route): step 1/1. Allosterically activated by GTP. Inhibited by UTP. Catalyzes the reversible phosphorylation of UMP to UDP. In Koribacter versatilis (strain Ellin345), this protein is Uridylate kinase.